We begin with the raw amino-acid sequence, 215 residues long: MAAPPARARADYDYLIKLLLIGDSGVGKSCLLLRFSDGSFTTSFITTIGIDFKIRTIELDGKRIKLQIWDTAGQERFRTITTAYYRGAMGILLVYDVTDESSFNNIRNWIRNIEQHASDNVNKILVGNKADMDESKRAVPTAKGQALADEYGIKFFETSAKTNLNVEEVFFSIARDIKQRLADSDTRQEAQPSITIKPADQSGNQAAAKSACCGS.

GTP-binding positions include G22 to S29, D70 to Q74, and N128 to D131. The segment at D183–S215 is disordered. Residues C212 and C213 are each lipidated (S-geranylgeranyl cysteine).

Belongs to the small GTPase superfamily. Rab family.

It is found in the cell membrane. The chain is Ras-related protein RAB1BV (RAB1BV) from Beta vulgaris (Sugar beet).